The sequence spans 98 residues: NADH-ubiquinone oxidoreductase chain 4L (98 aa).

A run of 3 helical transmembrane segments spans residues T2 to F22, S29 to L49, and I61 to V81.

It belongs to the complex I subunit 4L family. As to quaternary structure, core subunit of respiratory chain NADH dehydrogenase (Complex I) which is composed of 45 different subunits.

The protein resides in the mitochondrion inner membrane. The enzyme catalyses a ubiquinone + NADH + 5 H(+)(in) = a ubiquinol + NAD(+) + 4 H(+)(out). Core subunit of the mitochondrial membrane respiratory chain NADH dehydrogenase (Complex I) which catalyzes electron transfer from NADH through the respiratory chain, using ubiquinone as an electron acceptor. Part of the enzyme membrane arm which is embedded in the lipid bilayer and involved in proton translocation. The polypeptide is NADH-ubiquinone oxidoreductase chain 4L (MT-ND4L) (Avahi cleesei (Cleese's woolly lemur)).